Here is a 180-residue protein sequence, read N- to C-terminus: ATP-dependent protease subunit HslV (180 aa).

Thr5 is an active-site residue. Na(+)-binding residues include Gly165, Cys168, and Thr171.

Belongs to the peptidase T1B family. HslV subfamily. As to quaternary structure, a double ring-shaped homohexamer of HslV is capped on each side by a ring-shaped HslU homohexamer. The assembly of the HslU/HslV complex is dependent on binding of ATP.

The protein localises to the cytoplasm. It catalyses the reaction ATP-dependent cleavage of peptide bonds with broad specificity.. With respect to regulation, allosterically activated by HslU binding. Its function is as follows. Protease subunit of a proteasome-like degradation complex believed to be a general protein degrading machinery. This chain is ATP-dependent protease subunit HslV, found in Helicobacter hepaticus (strain ATCC 51449 / 3B1).